The sequence spans 49 residues: Large ribosomal subunit protein bL33B (49 aa).

The protein belongs to the bacterial ribosomal protein bL33 family.

In Shouchella clausii (strain KSM-K16) (Alkalihalobacillus clausii), this protein is Large ribosomal subunit protein bL33B.